The following is a 277-amino-acid chain: MEVFSRSNPYRGPVKGVVLDWAGTTVDYGCIGPLSVFVEVFRHNWVEVTIEEARAPMGLSREDHLRAMCRAESVARKWEDVHGAPPSEMDIGNMARMVEAHLAYTIAQHADLIPGVVEAVEALRGQGIRIGSSTGYTSDMMDMLVPAVEENGYRPDSIVCASDVPAGRPFPWMCYQNAINLEVYPMAAMVKIGDTVADIREGLNAGMWTIGLTLTGNELGLSEEEVAAMDPEELRRRMDNIEQRFRNAGAHFVAQGLRDCPAVIRDINELLAGGERP.

The protein belongs to the HAD-like hydrolase superfamily. PhnX family.

This chain is Phosphonoacetaldehyde hydrolase-like protein (phnX2), found in Syntrophobacter fumaroxidans (strain DSM 10017 / MPOB).